We begin with the raw amino-acid sequence, 273 residues long: 4-hydroxy-tetrahydrodipicolinate reductase (273 aa).

Position 12 to 17 (12 to 17) interacts with NAD(+); the sequence is GAMGRM. Lysine 39 serves as a coordination point for NADP(+). Residues 102–104 and 126–129 contribute to the NAD(+) site; these read GTT and ASNF. The active-site Proton donor/acceptor is the histidine 159. Histidine 160 is a binding site for (S)-2,3,4,5-tetrahydrodipicolinate. Lysine 163 functions as the Proton donor in the catalytic mechanism. 169 to 170 is a binding site for (S)-2,3,4,5-tetrahydrodipicolinate; the sequence is GT.

It belongs to the DapB family. As to quaternary structure, homotetramer.

The protein resides in the cytoplasm. The enzyme catalyses (S)-2,3,4,5-tetrahydrodipicolinate + NAD(+) + H2O = (2S,4S)-4-hydroxy-2,3,4,5-tetrahydrodipicolinate + NADH + H(+). The catalysed reaction is (S)-2,3,4,5-tetrahydrodipicolinate + NADP(+) + H2O = (2S,4S)-4-hydroxy-2,3,4,5-tetrahydrodipicolinate + NADPH + H(+). It functions in the pathway amino-acid biosynthesis; L-lysine biosynthesis via DAP pathway; (S)-tetrahydrodipicolinate from L-aspartate: step 4/4. Functionally, catalyzes the conversion of 4-hydroxy-tetrahydrodipicolinate (HTPA) to tetrahydrodipicolinate. This chain is 4-hydroxy-tetrahydrodipicolinate reductase, found in Buchnera aphidicola subsp. Schizaphis graminum (strain Sg).